An 862-amino-acid chain; its full sequence is Kinesin-like protein KIN-7E (862 aa).

A Kinesin motor domain is found at 24–346; sequence KILVLVRLRP…LLFACCAKEV (323 aa). Residue 110-117 participates in ATP binding; the sequence is GQTSSGKT. Positions 355–428 form a coiled coil; the sequence is VMSDKALVKQ…RLEDFMKMVE (74 aa). Disordered regions lie at residues 463-505 and 542-632; these read RTSF…QSEE and ANGE…TPLV. The span at 465–476 shows a compositional bias: polar residues; the sequence is SFISDGTSTPLS. Basic and acidic residues predominate over residues 494-505; sequence MSPRHSGDQSEE. Residues 612 to 621 are compositionally biased toward polar residues; that stretch reads DSMTSRGSDS. Residue Lys734 forms a Glycyl lysine isopeptide (Lys-Gly) (interchain with G-Cter in ubiquitin) linkage.

It belongs to the TRAFAC class myosin-kinesin ATPase superfamily. Kinesin family. KIN-7 subfamily.

In Arabidopsis thaliana (Mouse-ear cress), this protein is Kinesin-like protein KIN-7E.